The chain runs to 308 residues: tRNA dimethylallyltransferase (308 aa).

8–15 (GATAVGKT) is an ATP binding site. 10–15 (TAVGKT) provides a ligand contact to substrate. Residues 33–36 (DSRQ) form an interaction with substrate tRNA region.

This sequence belongs to the IPP transferase family. As to quaternary structure, monomer. It depends on Mg(2+) as a cofactor.

It catalyses the reaction adenosine(37) in tRNA + dimethylallyl diphosphate = N(6)-dimethylallyladenosine(37) in tRNA + diphosphate. Catalyzes the transfer of a dimethylallyl group onto the adenine at position 37 in tRNAs that read codons beginning with uridine, leading to the formation of N6-(dimethylallyl)adenosine (i(6)A). The polypeptide is tRNA dimethylallyltransferase (Kosmotoga olearia (strain ATCC BAA-1733 / DSM 21960 / TBF 19.5.1)).